The chain runs to 485 residues: Cysteine--tRNA ligase (485 aa).

Cys29 contacts Zn(2+). The short motif at 31–41 (VTVYDHCHIGH) is the 'HIGH' region element. Cys209, His234, and Glu238 together coordinate Zn(2+). The 'KMSKS' region motif lies at 266 to 270 (KMSKS). Lys269 provides a ligand contact to ATP.

Belongs to the class-I aminoacyl-tRNA synthetase family. Monomer. Requires Zn(2+) as cofactor.

Its subcellular location is the cytoplasm. The catalysed reaction is tRNA(Cys) + L-cysteine + ATP = L-cysteinyl-tRNA(Cys) + AMP + diphosphate. The sequence is that of Cysteine--tRNA ligase from Geobacter metallireducens (strain ATCC 53774 / DSM 7210 / GS-15).